The chain runs to 147 residues: Nucleoside diphosphate kinase (147 aa).

Lys-11, Phe-59, Arg-87, Thr-93, Arg-104, and Asn-114 together coordinate ATP. Residue His-117 is the Pros-phosphohistidine intermediate of the active site.

The protein belongs to the NDK family. It depends on Mg(2+) as a cofactor.

The protein localises to the cytoplasm. The enzyme catalyses a 2'-deoxyribonucleoside 5'-diphosphate + ATP = a 2'-deoxyribonucleoside 5'-triphosphate + ADP. It catalyses the reaction a ribonucleoside 5'-diphosphate + ATP = a ribonucleoside 5'-triphosphate + ADP. Functionally, major role in the synthesis of nucleoside triphosphates other than ATP. The ATP gamma phosphate is transferred to the NDP beta phosphate via a ping-pong mechanism, using a phosphorylated active-site intermediate. This chain is Nucleoside diphosphate kinase, found in Sulfurisphaera tokodaii (strain DSM 16993 / JCM 10545 / NBRC 100140 / 7) (Sulfolobus tokodaii).